We begin with the raw amino-acid sequence, 286 residues long: 2-hydroxy-6-oxononadienedioate/2-hydroxy-6-oxononatrienedioate hydrolase 2 (286 aa).

The active-site Proton acceptor is the His-266.

This sequence belongs to the AB hydrolase superfamily. MhpC family. In terms of assembly, homodimer.

The enzyme catalyses (2Z,4E)-2-hydroxy-6-oxonona-2,4-dienedioate + H2O = (2Z)-2-hydroxypenta-2,4-dienoate + succinate + H(+). The catalysed reaction is (2Z,4E,7E)-2-hydroxy-6-oxonona-2,4,7-trienedioate + H2O = (2Z)-2-hydroxypenta-2,4-dienoate + fumarate + H(+). Its pathway is aromatic compound metabolism; 3-phenylpropanoate degradation. Functionally, catalyzes the cleavage of the C5-C6 bond of 2-hydroxy-6-oxononadienedioate and 2-hydroxy-6-oxononatrienedioate, a dienol ring fission product of the bacterial meta-cleavage pathway for degradation of phenylpropionic acid. In Pseudomonas putida (Arthrobacter siderocapsulatus), this protein is 2-hydroxy-6-oxononadienedioate/2-hydroxy-6-oxononatrienedioate hydrolase 2.